The following is a 341-amino-acid chain: TERF1-interacting nuclear factor 2 (341 aa).

Ala2 carries the N-acetylalanine modification. Positions 243–265 match the TBM motif; that stretch reads HRFNLAPLGKRKSRSHWTSAKAC. The short motif at 249–255 is the Nuclear localization signal element; it reads PLGKRKS. The disordered stretch occupies residues 283-341; it reads PAQDLSNPKSREEPGAASAASVGTEPVCTEEAKTPSRPLGKRALEETPPDSPAASRRTV.

Monomer. Found in a complex with POT1; TERF1 and TNKS1. Component of the shelterin complex (telosome) composed of TERF1, TERF2, TINF2, TERF2IP, ACD and POT1. Interacts with TERF1.

Its subcellular location is the nucleus. It is found in the chromosome. The protein resides in the telomere. In terms of biological role, component of the shelterin complex (telosome) that is involved in the regulation of telomere length and protection. Shelterin associates with arrays of double-stranded TTAGGG repeats added by telomerase and protects chromosome ends; without its protective activity, telomeres are no longer hidden from the DNA damage surveillance and chromosome ends are inappropriately processed by DNA repair pathways. Plays a role in shelterin complex assembly. This chain is TERF1-interacting nuclear factor 2 (Tinf2), found in Mus musculus (Mouse).